We begin with the raw amino-acid sequence, 455 residues long: tRNA modification GTPase MnmE (455 aa).

Residues Lys-29, Glu-91, and Arg-131 each coordinate (6S)-5-formyl-5,6,7,8-tetrahydrofolate. Residues 226-378 form the TrmE-type G domain; that stretch reads GLKVALVGLP…LIQELLKLAG (153 aa). K(+) is bound at residue Asn-236. Residues 236–241, 255–261, 280–283, and 341–344 contribute to the GTP site; these read NVGKSS, TDLPGTT, DTAG, and NKAD. A Mg(2+)-binding site is contributed by Ser-240. K(+) contacts are provided by Thr-255, Leu-257, and Thr-260. Residue Thr-261 coordinates Mg(2+). Lys-455 serves as a coordination point for (6S)-5-formyl-5,6,7,8-tetrahydrofolate.

The protein belongs to the TRAFAC class TrmE-Era-EngA-EngB-Septin-like GTPase superfamily. TrmE GTPase family. As to quaternary structure, homodimer. Heterotetramer of two MnmE and two MnmG subunits. It depends on K(+) as a cofactor.

It is found in the cytoplasm. Its function is as follows. Exhibits a very high intrinsic GTPase hydrolysis rate. Involved in the addition of a carboxymethylaminomethyl (cmnm) group at the wobble position (U34) of certain tRNAs, forming tRNA-cmnm(5)s(2)U34. This is tRNA modification GTPase MnmE from Prochlorococcus marinus (strain SARG / CCMP1375 / SS120).